Here is a 120-residue protein sequence, read N- to C-terminus: Large ribosomal subunit protein uL22 (120 aa).

Positions 1–20 (MFVNRRYTARGKNLPSSPKK) are disordered.

It belongs to the universal ribosomal protein uL22 family. In terms of assembly, part of the 50S ribosomal subunit.

Its function is as follows. This protein binds specifically to 23S rRNA; its binding is stimulated by other ribosomal proteins, e.g. L4, L17, and L20. It is important during the early stages of 50S assembly. It makes multiple contacts with different domains of the 23S rRNA in the assembled 50S subunit and ribosome. In terms of biological role, the globular domain of the protein is located near the polypeptide exit tunnel on the outside of the subunit, while an extended beta-hairpin is found that lines the wall of the exit tunnel in the center of the 70S ribosome. This is Large ribosomal subunit protein uL22 from Borrelia turicatae (strain 91E135).